We begin with the raw amino-acid sequence, 298 residues long: GTPase Era (298 aa).

In terms of domain architecture, Era-type G spans arginine 7–glutamine 174. A G1 region spans residues glycine 15–serine 22. Glycine 15–serine 22 serves as a coordination point for GTP. A G2 region spans residues glutamine 41–asparagine 45. Residues aspartate 62–glycine 65 form a G3 region. Residues aspartate 62 to isoleucine 66 and asparagine 124 to aspartate 127 each bind GTP. Positions asparagine 124–aspartate 127 are G4. The interval isoleucine 153 to alanine 155 is G5. The KH type-2 domain maps to threonine 205 to lysine 283.

This sequence belongs to the TRAFAC class TrmE-Era-EngA-EngB-Septin-like GTPase superfamily. Era GTPase family. Monomer.

The protein localises to the cytoplasm. Its subcellular location is the cell inner membrane. An essential GTPase that binds both GDP and GTP, with rapid nucleotide exchange. Plays a role in 16S rRNA processing and 30S ribosomal subunit biogenesis and possibly also in cell cycle regulation and energy metabolism. In Geobacter metallireducens (strain ATCC 53774 / DSM 7210 / GS-15), this protein is GTPase Era.